The following is a 1216-amino-acid chain: FK506-binding protein 15 (1216 aa).

N-acetylmethionine is present on methionine 1. Residues serine 14 and serine 23 each carry the phosphoserine modification. Residues 41–68 are disordered; sequence YTAPKQPKKGQGTAAGNQTAPKPAPATT. Residues 59–68 show a composition bias toward low complexity; sequence TAPKPAPATT. An important for function in growth cone organization region spans residues 71–168; that stretch reads SSVLFATAVH…AVSFNKQVCV (98 aa). The residue at position 91 (lysine 91) is an N6-acetyllysine. The PPIase FKBP-type domain maps to 196–289; it reads GDSLEVAYTG…VFEVEVRRVK (94 aa). A disordered region spans residues 292 to 357; it reads RDSGSDGHSV…QLTVNSNPDT (66 aa). Positions 303 to 322 are enriched in low complexity; it reads SRDSAAPSPIPASDSLSADP. Residues serine 306, serine 310, serine 342, serine 344, and serine 617 each carry the phosphoserine modification. A compositionally biased stretch (polar residues) spans 340 to 356; the sequence is SKSNSLSEQLTVNSNPD. 2 coiled-coil regions span residues 519-790 and 820-865; these read MAVN…AAAE and QQYR…RLEK. The interval 927–1216 is disordered; that stretch reads HQEEEEEEEE…DDDDDIGWLG (290 aa). A compositionally biased stretch (acidic residues) spans 929-940; it reads EEEEEEEEEEEE. Serine 948 is subject to Phosphoserine. Residues 954–964 are compositionally biased toward pro residues; it reads PATPGMPPAPP. A compositionally biased stretch (low complexity) spans 983-994; that stretch reads TTPLPLQALPTP. Residue serine 1018 is modified to Phosphoserine. Residues 1036–1045 show a composition bias toward pro residues; it reads TSIPPKPPGP. A phosphoserine mark is found at serine 1050 and serine 1091. Residue threonine 1093 is modified to Phosphothreonine. Phosphoserine is present on residues serine 1108, serine 1153, serine 1157, serine 1159, and serine 1190. At threonine 1198 the chain carries Phosphothreonine. Positions 1202 to 1216 are enriched in acidic residues; the sequence is GDDDDDDDDDIGWLG.

It belongs to the FKBP-type PPIase family. In terms of assembly, interacts with WIP and actin. Interacts with TBC1D23. As to expression, expressed in brain, with highest levels in the granular cell layer of cerebellum and in the granule cell layer of dentate gyrus.

Its subcellular location is the cytoplasm. The protein localises to the cell projection. The protein resides in the axon. It is found in the early endosome. Functionally, involved in the transport of early endosomes at the level of transition between microfilament-based and microtubule-based movement. May be involved in the cytoskeletal organization of neuronal growth cones. Seems to be inactive as a PPIase. This is FK506-binding protein 15 (Fkbp15) from Mus musculus (Mouse).